Here is a 475-residue protein sequence, read N- to C-terminus: PRAME family member 20 (475 aa).

The stretch at R97–C124 is one LRR 1; degenerate repeat. One copy of the LRR 2; degenerate repeat lies at H179 to N203. One copy of the LRR 3; degenerate repeat lies at L204 to Q230. An LRR 4; degenerate repeat occupies M231 to K265. LRR repeat units follow at residues L266–L291, K292–K323, T324–V342, A348–R375, and C376–H400.

The protein belongs to the PRAME family.

The protein is PRAME family member 20 of Homo sapiens (Human).